Consider the following 568-residue polypeptide: Nucleolar protein 58 (568 aa).

A Nop domain is found at 293 to 417 (IAPNLTALVG…LESRLRALEH (125 aa)). Residues 430 to 568 (ANGQQGRQQP…KKKKKKKKDE (139 aa)) are disordered. Over residues 471-482 (EEVKEEKDEKKD) the composition is skewed to basic and acidic residues. Residues 522-533 (RKEAKKAAKAAK) are compositionally biased toward basic residues. The span at 534–544 (KAAEESGDGDK) shows a compositional bias: basic and acidic residues.

It belongs to the NOP5/NOP56 family.

The protein localises to the nucleus. It localises to the nucleolus. Required for pre-18S rRNA processing. May bind microtubules. The protein is Nucleolar protein 58 (NOP58) of Cryptococcus neoformans var. neoformans serotype D (strain JEC21 / ATCC MYA-565) (Filobasidiella neoformans).